Reading from the N-terminus, the 146-residue chain is MSYCKIEAPYPEAEAGEKRIIFALDPKGDEVEQEQCMLQLIPGRVLEMSRNDAANHQTLGGSIEQHTVEGFGAKFFHVKLAKQAVSTLMYVHAEDHGEKVRKFVAMSNAPMFPYRSRYPVVVYLPKDAELRYGIWCGGQQMQAATE.

The protein belongs to the protease inhibitor I11 (ecotin) family.

This Leishmania major protein is Ecotin-like protein 1 (ISP1).